The primary structure comprises 121 residues: Large ribosomal subunit protein uL18 (121 aa).

It belongs to the universal ribosomal protein uL18 family. In terms of assembly, part of the 50S ribosomal subunit; part of the 5S rRNA/L5/L18/L25 subcomplex. Contacts the 5S and 23S rRNAs.

Its function is as follows. This is one of the proteins that bind and probably mediate the attachment of the 5S RNA into the large ribosomal subunit, where it forms part of the central protuberance. The chain is Large ribosomal subunit protein uL18 from Ureaplasma parvum serovar 3 (strain ATCC 27815 / 27 / NCTC 11736).